Reading from the N-terminus, the 379-residue chain is Stimulator of interferon genes protein (379 aa).

3 helical membrane passes run 20-40 (VAAF…GEPS), 87-107 (ACLG…YFYV), and 115-135 (LPLT…ILLG). Residues Cys-88 and Cys-91 are each lipidated (S-palmitoyl cysteine). The tract at residues 153 to 340 (FNVAHGLAWS…KHLRQEEREE (188 aa)) is cyclic dinucleotide-binding domain (CBD). Ser-162, Tyr-167, Arg-238, and Thr-263 together coordinate 2',3'-cGAMP. 3',3'-c-di-GMP is bound by residues Ser-162, Tyr-167, 238–241 (RVYT), and Thr-263. 2',3'-cUAMP contacts are provided by Tyr-167, Arg-238, and Thr-263. Residues 340 to 379 (EVTMGTAGTFVAPGSSTLHQEPELLISGMDQPLPLRTDIF) form a C-terminal tail (CTT) region. Ser-355 is subject to Phosphoserine. The residue at position 356 (Thr-356) is a Phosphothreonine. The pLxIS motif signature appears at 363–366 (LLIS). Phosphoserine; by TBK1 is present on Ser-366.

This sequence belongs to the STING family. In terms of assembly, homodimer; forms a homodimer in absence of cyclic nucleotide (c-di-GMP or cGAMP). Homotetramer; in presence of cyclic nucleotide (c-di-GMP or cGAMP), forms tetramers and higher-order oligomers through side-by-side packing. Interacts (when phosphorylated) with IRF3; following activation and phosphorylation on the pLxIS motif by TBK1, recruits IRF3. Interacts with TBK1; when homodimer, leading to subsequent production of IFN-beta. Interacts (via transmembrane domain) with TMEM203. In terms of processing, phosphorylation by TBK1 leads to activation and production of IFN-beta. Following cyclic nucleotide (c-di-GMP or cGAMP)-binding, activation and translocation from the endoplasmic reticulum, STING1 is phosphorylated by TBK1 at Ser-366 in the pLxIS motif. The phosphorylated pLxIS motif constitutes an IRF3-binding motif, leading to recruitment of the transcription factor IRF3 to induce type-I interferons and other cytokines. In contrast, lacks phosphorylation site at position 358, leading to reduced production of type-I interferons and other cytokines.

The protein localises to the endoplasmic reticulum membrane. The protein resides in the cytoplasm. It is found in the perinuclear region. Its subcellular location is the endoplasmic reticulum-Golgi intermediate compartment membrane. It localises to the golgi apparatus membrane. The protein localises to the cytoplasmic vesicle. The protein resides in the autophagosome membrane. It is found in the mitochondrion outer membrane. Its subcellular location is the cell membrane. The enzyme catalyses H(+)(in) = H(+)(out). Facilitator of innate immune signaling that acts as a sensor of cytosolic DNA from bacteria and viruses and promotes low production of type I interferon (IFN-alpha and IFN-beta). Compared to other mammals, STING1-dependent type I interferon induction is strongly reduced in bats, suggesting that the cGAS-STING pathway promotes a limited inflammatory response. Innate immune response is triggered in response to non-CpG double-stranded DNA from viruses and bacteria delivered to the cytoplasm. Acts by binding cyclic dinucleotides: recognizes and binds cyclic di-GMP (c-di-GMP), a second messenger produced by bacteria, cyclic UMP-AMP (2',3'-cUAMP), and cyclic GMP-AMP (cGAMP), a messenger produced by CGAS in response to DNA virus in the cytosol. Upon binding to c-di-GMP, cUAMP or cGAMP, STING1 oligomerizes, translocates from the endoplasmic reticulum and is phosphorylated by TBK1 on the pLxIS motif, leading to recruitment and subsequent activation of the transcription factor IRF3 to induce expression of type I interferon and exert a potent anti-viral state. In addition to promote the production of type I interferons, plays a direct role in autophagy. Following cGAMP-binding, STING1 buds from the endoplasmic reticulum into COPII vesicles, which then form the endoplasmic reticulum-Golgi intermediate compartment (ERGIC). The ERGIC serves as the membrane source for WIPI2 recruitment and LC3 lipidation, leading to formation of autophagosomes that target cytosolic DNA or DNA viruses for degradation by the lysosome. Promotes autophagy by acting as a proton channel that directs proton efflux from the Golgi to facilitate MAP1LC3B/LC3B lipidation. The autophagy- and interferon-inducing activities can be uncoupled and autophagy induction is independent of TBK1 phosphorylation. This Eidolon helvum (Straw-colored fruit bat) protein is Stimulator of interferon genes protein.